Consider the following 338-residue polypeptide: tRNA N6-adenosine threonylcarbamoyltransferase (338 aa).

Positions 110, 114, and 131 each coordinate Fe cation. Residues 131–135, Asp163, Asp184, and Asn268 each bind substrate; that span reads YVSGG. Position 296 (Asp296) interacts with Fe cation.

This sequence belongs to the KAE1 / TsaD family. It depends on Fe(2+) as a cofactor.

It localises to the cytoplasm. The enzyme catalyses L-threonylcarbamoyladenylate + adenosine(37) in tRNA = N(6)-L-threonylcarbamoyladenosine(37) in tRNA + AMP + H(+). Functionally, required for the formation of a threonylcarbamoyl group on adenosine at position 37 (t(6)A37) in tRNAs that read codons beginning with adenine. Is probably involved in the transfer of the threonylcarbamoyl moiety of threonylcarbamoyl-AMP (TC-AMP) to the N6 group of A37. In Staphylothermus marinus (strain ATCC 43588 / DSM 3639 / JCM 9404 / F1), this protein is tRNA N6-adenosine threonylcarbamoyltransferase.